The chain runs to 335 residues: tRNA N6-adenosine threonylcarbamoyltransferase (335 aa).

Positions 109, 113, and 130 each coordinate a divalent metal cation. Substrate contacts are provided by residues 130-134 (YVSGG), Asp-162, Gly-177, Glu-181, and Asn-266. Asp-294 provides a ligand contact to a divalent metal cation.

Belongs to the KAE1 / TsaD family. Component of the EKC/KEOPS complex composed of at least tp53rk, tprkb, osgep and lage3; the whole complex dimerizes. Requires a divalent metal cation as cofactor.

The protein resides in the cytoplasm. It localises to the nucleus. It carries out the reaction L-threonylcarbamoyladenylate + adenosine(37) in tRNA = N(6)-L-threonylcarbamoyladenosine(37) in tRNA + AMP + H(+). Component of the EKC/KEOPS complex that is required for the formation of a threonylcarbamoyl group on adenosine at position 37 (t(6)A37) in tRNAs that read codons beginning with adenine. The complex is probably involved in the transfer of the threonylcarbamoyl moiety of threonylcarbamoyl-AMP (TC-AMP) to the N6 group of A37. Osgep likely plays a direct catalytic role in this reaction, but requires other protein(s) of the complex to fulfill this activity. This chain is tRNA N6-adenosine threonylcarbamoyltransferase, found in Xenopus laevis (African clawed frog).